The primary structure comprises 439 residues: Acyl-coenzyme A thioesterase 9, mitochondrial (439 aa).

Residues 1–21 constitute a mitochondrion transit peptide; the sequence is MKRAAIRLWTLNKGLLTHGRG. HotDog ACOT-type domains follow at residues 85-209 and 289-401; these read SYIE…RDSE and EDTK…EKEV. Lysine 102 bears the N6-acetyllysine mark.

The protein belongs to the acyl coenzyme A hydrolase family. Interacts with NYAP1, NYAP2 and MYO16. In terms of tissue distribution, widely expressed.

The protein resides in the mitochondrion. The protein localises to the mitochondrion matrix. Its subcellular location is the mitochondrion inner membrane. The catalysed reaction is butanoyl-CoA + H2O = butanoate + CoA + H(+). The enzyme catalyses propanoyl-CoA + H2O = propanoate + CoA + H(+). It carries out the reaction hexadecanoyl-CoA + H2O = hexadecanoate + CoA + H(+). It catalyses the reaction octanoyl-CoA + H2O = octanoate + CoA + H(+). The catalysed reaction is decanoyl-CoA + H2O = decanoate + CoA + H(+). The enzyme catalyses tetradecanoyl-CoA + H2O = tetradecanoate + CoA + H(+). It carries out the reaction 4,8-dimethylnonanoyl-CoA + H2O = 4,8-dimethylnonanoate + CoA + H(+). It catalyses the reaction 3-methylbutanoyl-CoA + H2O = 3-methylbutanoate + CoA + H(+). The catalysed reaction is 2-methylpropanoyl-CoA + H2O = 2-methylpropanoate + CoA + H(+). It functions in the pathway lipid metabolism; fatty acid metabolism. With respect to regulation, strongly inhibited by NADH and CoA. Functionally, mitochondrial acyl-CoA thioesterase. Catalyzes the hydrolysis of acyl-CoAs into free fatty acids and coenzyme A (CoA), regulating their respective intracellular levels. Shows a clear preference for hydrophobic short-, medium-, and long-chain saturated acyl-CoAs with some activity also with short-chain dicarboxylic CoA esters. Regulates both mitochondrial lipid and amino acid metabolism. This Mus musculus (Mouse) protein is Acyl-coenzyme A thioesterase 9, mitochondrial (Acot9).